We begin with the raw amino-acid sequence, 290 residues long: Glutaredoxin domain-containing cysteine-rich protein 1 (290 aa).

Residues 127-234 (LQQPSTDLEF…DILTKIERVQ (108 aa)) form the Glutaredoxin domain.

Belongs to the GRXCR1 family. In terms of tissue distribution, expressed at low levels in adult lung, brain and duodenum with moderate levels in testis. Highly expressed in fetal cochlea.

Its subcellular location is the cell projection. It localises to the stereocilium. The protein localises to the microvillus. The protein resides in the kinocilium. In terms of biological role, may play a role in actin filament architecture in developing stereocilia of sensory cells. In Homo sapiens (Human), this protein is Glutaredoxin domain-containing cysteine-rich protein 1 (GRXCR1).